The sequence spans 453 residues: tRNA (guanine-N(7)-)-methyltransferase non-catalytic subunit TRM82 (453 aa).

The disordered stretch occupies residues 69 to 99; the sequence is ENEEKGIKKSKTNEGNTIEKKHDAKIPVPGP. 2 WD repeats span residues 103-143 and 244-286; these read PIYS…NDNC and GHKE…DEFD.

This sequence belongs to the WD repeat TRM82 family. Forms a heterodimer with the catalytic subunit TRM8.

The protein localises to the nucleus. The protein operates within tRNA modification; N(7)-methylguanine-tRNA biosynthesis. In terms of biological role, required for the formation of N(7)-methylguanine at position 46 (m7G46) in tRNA. In the complex, it is required to stabilize and induce conformational changes of the catalytic subunit. This chain is tRNA (guanine-N(7)-)-methyltransferase non-catalytic subunit TRM82, found in Vanderwaltozyma polyspora (strain ATCC 22028 / DSM 70294 / BCRC 21397 / CBS 2163 / NBRC 10782 / NRRL Y-8283 / UCD 57-17) (Kluyveromyces polysporus).